Consider the following 380-residue polypeptide: Protein-tyrosine sulfotransferase A (380 aa).

The Cytoplasmic segment spans residues methionine 1 to glutamate 6. Residues leucine 7–alanine 27 traverse the membrane as a helical; Signal-anchor for type II membrane protein segment. At aspartate 28 to leucine 380 the chain is on the lumenal side. Residue asparagine 66 is glycosylated (N-linked (GlcNAc...) asparagine). Arginine 79 to threonine 83 serves as a coordination point for 3'-phosphoadenylyl sulfate. Residues cysteine 97 and cysteine 157 are joined by a disulfide bond. The active-site Proton donor/acceptor is glutamate 100. The tract at residues arginine 102 to arginine 106 is interaction with peptide substrate. 3'-phosphoadenylyl sulfate-binding residues include arginine 184, serine 192, and arginine 196. An intrachain disulfide couples cysteine 226 to cysteine 234. 3'-phosphoadenylyl sulfate-binding positions include tyrosine 239, serine 284–asparagine 293, and lysine 299.

This sequence belongs to the protein sulfotransferase family.

The protein localises to the golgi apparatus membrane. It catalyses the reaction L-tyrosyl-[protein] + 3'-phosphoadenylyl sulfate = O-sulfo-L-tyrosine-[protein] + adenosine 3',5'-bisphosphate + H(+). Functionally, catalyzes the O-sulfation of tyrosine residues within acidic motifs of polypeptides, using 3'-phosphoadenylyl sulfate (PAPS) as cosubstrate. The chain is Protein-tyrosine sulfotransferase A (tpst-1) from Caenorhabditis elegans.